The following is a 628-amino-acid chain: tRNA uridine 5-carboxymethylaminomethyl modification enzyme MnmG (628 aa).

Residue 14 to 19 (GAGHAG) coordinates FAD. NAD(+) is bound at residue 274-288 (GPRYCPSIEDKIVRF).

This sequence belongs to the MnmG family. In terms of assembly, homodimer. Heterotetramer of two MnmE and two MnmG subunits. Requires FAD as cofactor.

It localises to the cytoplasm. Functionally, NAD-binding protein involved in the addition of a carboxymethylaminomethyl (cmnm) group at the wobble position (U34) of certain tRNAs, forming tRNA-cmnm(5)s(2)U34. In Clostridium kluyveri (strain ATCC 8527 / DSM 555 / NBRC 12016 / NCIMB 10680 / K1), this protein is tRNA uridine 5-carboxymethylaminomethyl modification enzyme MnmG.